The following is a 189-amino-acid chain: Frataxin-like protein, mitochondrial (189 aa).

The N-terminal 50 residues, 1–50 (MNCARLHQRIPLRAMALTTTSYPALAPSHSFANASTSVMTASAMAVAHRA), are a transit peptide targeting the mitochondrion.

This sequence belongs to the frataxin family. In terms of assembly, interacts with IscU; the interaction is direct.

The protein localises to the mitochondrion. It carries out the reaction 4 Fe(2+) + O2 + 4 H(+) = 4 Fe(3+) + 2 H2O. Functionally, iron-binding protein which binds 2 iron atoms per monomer. Probably, acts as an iron carrier for the biosynthesis of Fe-S clusters. Stimulates the cysteine desulphurase activity of IscS in the presence of IscU. The protein is Frataxin-like protein, mitochondrial of Leishmania donovani.